Reading from the N-terminus, the 314-residue chain is Dihydropteroate synthase (314 aa).

Residues 10–294 (TVICGIINVT…DVASHRMAVE (285 aa)) enclose the Pterin-binding domain. A Mg(2+)-binding site is contributed by Asn-17. (7,8-dihydropterin-6-yl)methyl diphosphate is bound by residues Thr-57, Asp-91, Asn-110, Asp-201, Lys-237, and 282–284 (RVH).

This sequence belongs to the DHPS family. As to quaternary structure, homodimer or homotrimer. The cofactor is Mg(2+).

It catalyses the reaction (7,8-dihydropterin-6-yl)methyl diphosphate + 4-aminobenzoate = 7,8-dihydropteroate + diphosphate. It participates in cofactor biosynthesis; tetrahydrofolate biosynthesis; 7,8-dihydrofolate from 2-amino-4-hydroxy-6-hydroxymethyl-7,8-dihydropteridine diphosphate and 4-aminobenzoate: step 1/2. In terms of biological role, catalyzes the condensation of para-aminobenzoate (pABA) with 6-hydroxymethyl-7,8-dihydropterin diphosphate (DHPt-PP) to form 7,8-dihydropteroate (H2Pte), the immediate precursor of folate derivatives. This is Dihydropteroate synthase (sulA) from Streptococcus pneumoniae serotype 4 (strain ATCC BAA-334 / TIGR4).